The chain runs to 692 residues: Elongation factor G (692 aa).

Residues 8-282 (EKTRNIGIMA…AVLDYLPAPT (275 aa)) enclose the tr-type G domain. GTP-binding positions include 17 to 24 (AHIDAGKT), 81 to 85 (DTPGH), and 135 to 138 (NKMD).

The protein belongs to the TRAFAC class translation factor GTPase superfamily. Classic translation factor GTPase family. EF-G/EF-2 subfamily.

Its subcellular location is the cytoplasm. In terms of biological role, catalyzes the GTP-dependent ribosomal translocation step during translation elongation. During this step, the ribosome changes from the pre-translocational (PRE) to the post-translocational (POST) state as the newly formed A-site-bound peptidyl-tRNA and P-site-bound deacylated tRNA move to the P and E sites, respectively. Catalyzes the coordinated movement of the two tRNA molecules, the mRNA and conformational changes in the ribosome. The protein is Elongation factor G of Bacillus velezensis (strain DSM 23117 / BGSC 10A6 / LMG 26770 / FZB42) (Bacillus amyloliquefaciens subsp. plantarum).